The following is a 397-amino-acid chain: MAKAKFERTKPHVNIGTIGHIDHGKTTLTAAITKVLHDQYPDLNPYMPFDEIDKAPEEKARGITISIAHVEYQTEARHYAHVDCPGHADYIKNMITGAAQMDGAILVVAATDGPMPQTREHVLLARQVGVPYIVVALNKSDMVDDEELLELVELEVRELLSSQEYPGDDLPVVRVSALKALEGDPEWAGKLMELMTAVDTSIPQPEREIEKPFLMPIEDVFTITGRGTVVTGRAERGVLKPNEEVELVGIREKSTKTTCTGIEMFRKLLDEARAGENVGLLLRGVKREDVERGMVVIKPGTATPHTEFEATVYILSKEEGGRHTPFFQNYRPQFYFRTTDVTGVVTLPEGTEMVMPGDNTTMTVKLIQPIAMEDNLKFAIREGGRTVGAGRVTKIIK.

In terms of domain architecture, tr-type G spans 10 to 206 (KPHVNIGTIG…AVDTSIPQPE (197 aa)). Residues 19 to 26 (GHIDHGKT) form a G1 region. 19–26 (GHIDHGKT) provides a ligand contact to GTP. Residue Thr26 coordinates Mg(2+). The tract at residues 62–66 (GITIS) is G2. A G3 region spans residues 83 to 86 (DCPG). GTP contacts are provided by residues 83 to 87 (DCPGH) and 138 to 141 (NKSD). Residues 138-141 (NKSD) form a G4 region. The segment at 176–178 (SAL) is G5.

The protein belongs to the TRAFAC class translation factor GTPase superfamily. Classic translation factor GTPase family. EF-Tu/EF-1A subfamily. As to quaternary structure, monomer.

The protein resides in the cytoplasm. The catalysed reaction is GTP + H2O = GDP + phosphate + H(+). In terms of biological role, GTP hydrolase that promotes the GTP-dependent binding of aminoacyl-tRNA to the A-site of ribosomes during protein biosynthesis. This is Elongation factor Tu from Salinispora tropica (strain ATCC BAA-916 / DSM 44818 / JCM 13857 / NBRC 105044 / CNB-440).